The primary structure comprises 89 residues: Translation initiation factor IF-1, chloroplastic (89 aa).

In terms of domain architecture, S1-like spans 1–73; it reads MKEKEAKWVV…TKGRIIYRLP (73 aa).

The protein belongs to the IF-1 family. In terms of assembly, component of the 30S ribosomal translation pre-initiation complex which assembles on the 30S ribosome in the order IF-2 and IF-3, IF-1 and N-formylmethionyl-tRNA(fMet); mRNA recruitment can occur at any time during PIC assembly.

The protein resides in the plastid. It localises to the chloroplast. Functionally, one of the essential components for the initiation of protein synthesis. Stabilizes the binding of IF-2 and IF-3 on the 30S subunit to which N-formylmethionyl-tRNA(fMet) subsequently binds. Helps modulate mRNA selection, yielding the 30S pre-initiation complex (PIC). Upon addition of the 50S ribosomal subunit IF-1, IF-2 and IF-3 are released leaving the mature 70S translation initiation complex. The sequence is that of Translation initiation factor IF-1, chloroplastic from Jasminum nudiflorum (Winter jasmine).